Consider the following 455-residue polypeptide: C4-dicarboxylate transport protein (455 aa).

The next 8 membrane-spanning stretches (helical) occupy residues 20–40 (HLYFQVLCAIVAGALIGHFYP), 59–79 (MIIAPVIFLTIVTGLAGMGTL), 91–111 (GYFLTFSTLALVVGLITANVI), 160–180 (GNILQVLFVAILFGIGLILIG), 209–229 (PIGAFGAFAFTIGKYGIASVV), 231–251 (LATLVGTFYLTSALFVIVVLG), 344–364 (LLLVAMLSSKGAAGVTGAGFI), and 367–387 (AATLSVVPTVPVAGMALILGV).

The protein belongs to the dicarboxylate/amino acid:cation symporter (DAACS) (TC 2.A.23) family.

It is found in the cell inner membrane. In terms of biological role, responsible for the transport of dicarboxylates such as succinate, fumarate, and malate from the periplasm across the membrane. In Paracoccus denitrificans (strain Pd 1222), this protein is C4-dicarboxylate transport protein.